The chain runs to 62 residues: Calmodulin regulator protein PCP4 (62 aa).

The disordered stretch occupies residues 1-39; the sequence is MSERQGAGATNGKDKTSGENDGQKKVQEEFDIDMDAPET. The span at 12–28 shows a compositional bias: basic and acidic residues; that stretch reads GKDKTSGENDGQKKVQE. The acidic; binds calcium and is required for modulating the calcium-binding kinetics of calmodulin stretch occupies residues 28–40; sequence EEFDIDMDAPETE. The IQ domain occupies 39–62; sequence TERAAVAIQSQFRKFQKKKAGSQS.

This sequence belongs to the PCP4 family. Binds to both calcium-free and calcium-bound calmodulin. The affinity for the calcium-bound form is 50-fold greater.

In terms of biological role, functions as a modulator of calcium-binding by calmodulin. Thereby, regulates calmodulin activity and the different processes it controls. For instance, may play a role in neuronal differentiation through activation of calmodulin-dependent kinase signaling pathways. The polypeptide is Calmodulin regulator protein PCP4 (Homo sapiens (Human)).